The following is a 156-amino-acid chain: Ribosomal RNA large subunit methyltransferase H (156 aa).

Residues Leu-73, Gly-104, and Ile-123 to Leu-128 each bind S-adenosyl-L-methionine.

The protein belongs to the RNA methyltransferase RlmH family. Homodimer.

Its subcellular location is the cytoplasm. It catalyses the reaction pseudouridine(1915) in 23S rRNA + S-adenosyl-L-methionine = N(3)-methylpseudouridine(1915) in 23S rRNA + S-adenosyl-L-homocysteine + H(+). Specifically methylates the pseudouridine at position 1915 (m3Psi1915) in 23S rRNA. The chain is Ribosomal RNA large subunit methyltransferase H from Burkholderia vietnamiensis (strain G4 / LMG 22486) (Burkholderia cepacia (strain R1808)).